We begin with the raw amino-acid sequence, 510 residues long: Cytochrome P450 94B1 (510 aa).

A helical membrane pass occupies residues 3-23; sequence MLNAIILILFPIIGFVLIFSF. Position 450 (Cys450) interacts with heme.

The protein belongs to the cytochrome P450 family. Heme is required as a cofactor.

It is found in the membrane. The catalysed reaction is a jasmonyl-L-amino acid + reduced [NADPH--hemoprotein reductase] + O2 = a 12-hydroxyjasmonyl-L-alpha-amino acid + oxidized [NADPH--hemoprotein reductase] + H2O + H(+). Hydroxylase involved in the oxidation of the plant hormone jasmonoyl-L-isoleucine (JA-Ile), a bioactive phytohormone of the jasmonate-mediated signaling pathway. Converts JA-Ile to 12-hydroxy-JA-Ile. This chain is Cytochrome P450 94B1, found in Arabidopsis thaliana (Mouse-ear cress).